We begin with the raw amino-acid sequence, 423 residues long: COP9 signalosome complex subunit 3 (423 aa).

Ala2 carries the N-acetylalanine modification. The PCI domain occupies 197–365 (NFERALYFYE…GMVSFHDNPE (169 aa)). Residues 402-423 (QFVQKSMGSQEDDSGNKPSSYS) form a disordered region. A phosphoserine mark is found at Ser407, Ser410, and Ser423.

The protein belongs to the CSN3 family. In terms of assembly, component of the CSN complex, composed of COPS1/GPS1, COPS2, COPS3, COPS4, COPS5, COPS6, COPS7 (COPS7A or COPS7B), COPS8 and COPS9. In the complex, it probably interacts directly with COPS1, COPS4, COPS8 and COPS9. Interacts with CK2 and PKD. Interacts with the translation initiation factor EIF3S6 and IKBKG. Interacts with ERCC6.

It localises to the cytoplasm. The protein localises to the nucleus. Functionally, component of the COP9 signalosome complex (CSN), a complex involved in various cellular and developmental processes. The CSN complex is an essential regulator of the ubiquitin (Ubl) conjugation pathway by mediating the deneddylation of the cullin subunits of SCF-type E3 ligase complexes, leading to decrease the Ubl ligase activity of SCF-type complexes such as SCF, CSA or DDB2. The complex is also involved in phosphorylation of p53/TP53, c-jun/JUN, IkappaBalpha/NFKBIA, ITPK1 and IRF8/ICSBP, possibly via its association with CK2 and PKD kinases. CSN-dependent phosphorylation of TP53 and JUN promotes and protects degradation by the Ubl system, respectively. Essential to maintain the survival of epiblast cells and thus the development of the postimplantation embryo. The protein is COP9 signalosome complex subunit 3 (COPS3) of Bos taurus (Bovine).